Consider the following 33-residue polypeptide: Mu-theraphotoxin-Osp1b (33 aa).

3 disulfides stabilise this stretch: cysteine 2–cysteine 17, cysteine 9–cysteine 22, and cysteine 16–cysteine 29.

The protein belongs to the neurotoxin 10 (Hwtx-1) family. 22 (Htx-4) subfamily. As to expression, expressed by the venom gland.

It is found in the secreted. Functionally, voltage-gated sodium channel Nav1.7/SCN9A inhibitor. This Orphnaecus sp. (strain Maanghit-Cave/Philippines) (Tarantula spider) protein is Mu-theraphotoxin-Osp1b.